A 520-amino-acid chain; its full sequence is Bifunctional dihydrofolate reductase-thymidylate synthase (520 aa).

Positions 26 to 229 (AFSIVVALDK…LEFEICKYVP (204 aa)) constitute a DHFR domain. Val-30 lines the substrate pocket. NADP(+) contacts are provided by residues Ala-32 and 38–44 (GIGDGES). Asp-52 serves as a coordination point for substrate. NADP(+)-binding positions include 81–83 (RKT), 102–105 (LSSK), and 157–164 (GGAQVYAD). Substrate contacts are provided by Tyr-162 and Thr-180. The segment at 234–520 (ERQYLELIDR…HPPIKMEMAV (287 aa)) is thymidylate synthase. Arg-254 lines the dUMP pocket. The active site involves Cys-400. DUMP-binding positions include His-401, 421–425 (QRSCD), Asn-433, and 463–465 (HVY).

The protein in the N-terminal section; belongs to the dihydrofolate reductase family. In the C-terminal section; belongs to the thymidylate synthase family.

The enzyme catalyses (6S)-5,6,7,8-tetrahydrofolate + NADP(+) = 7,8-dihydrofolate + NADPH + H(+). The catalysed reaction is dUMP + (6R)-5,10-methylene-5,6,7,8-tetrahydrofolate = 7,8-dihydrofolate + dTMP. The protein operates within cofactor biosynthesis; tetrahydrofolate biosynthesis; 5,6,7,8-tetrahydrofolate from 7,8-dihydrofolate: step 1/1. Bifunctional enzyme. Involved in de novo dTMP biosynthesis. Key enzyme in folate metabolism. Catalyzes an essential reaction for de novo glycine and purine synthesis, DNA precursor synthesis, and for the conversion of dUMP to dTMP. This chain is Bifunctional dihydrofolate reductase-thymidylate synthase, found in Leishmania amazonensis.